Reading from the N-terminus, the 389-residue chain is Tryptophan synthase beta chain 1 (389 aa).

Residue lysine 84 is modified to N6-(pyridoxal phosphate)lysine.

The protein belongs to the TrpB family. As to quaternary structure, tetramer of two alpha and two beta chains. Requires pyridoxal 5'-phosphate as cofactor.

It is found in the plastid. Its subcellular location is the chloroplast. The catalysed reaction is (1S,2R)-1-C-(indol-3-yl)glycerol 3-phosphate + L-serine = D-glyceraldehyde 3-phosphate + L-tryptophan + H2O. It functions in the pathway amino-acid biosynthesis; L-tryptophan biosynthesis; L-tryptophan from chorismate: step 5/5. Functionally, the beta subunit is responsible for the synthesis of L-tryptophan from indole and L-serine. The protein is Tryptophan synthase beta chain 1 (TSB1) of Zea mays (Maize).